The sequence spans 133 residues: Ribonuclease P protein component (133 aa).

This sequence belongs to the RnpA family. In terms of assembly, consists of a catalytic RNA component (M1 or rnpB) and a protein subunit.

The catalysed reaction is Endonucleolytic cleavage of RNA, removing 5'-extranucleotides from tRNA precursor.. Its function is as follows. RNaseP catalyzes the removal of the 5'-leader sequence from pre-tRNA to produce the mature 5'-terminus. It can also cleave other RNA substrates such as 4.5S RNA. The protein component plays an auxiliary but essential role in vivo by binding to the 5'-leader sequence and broadening the substrate specificity of the ribozyme. The protein is Ribonuclease P protein component of Bartonella quintana (strain Toulouse) (Rochalimaea quintana).